Consider the following 386-residue polypeptide: Patatin-17 (386 aa).

Residues 1–23 (MATTKSFLILIFMILATTSSTFA) form the signal peptide. Positions 32 to 229 (LSIDGGGIRG…TVADPALLSI (198 aa)) constitute a PNPLA domain. The GXGXXG signature appears at 36 to 41 (GGGIRG). The GXSXG motif lies at 75 to 79 (GTSTG). Ser-77 (nucleophile) is an active-site residue. Residue Asn-202 is glycosylated (N-linked (GlcNAc...) asparagine). Asp-215 (proton acceptor) is an active-site residue. Residues 215–217 (DGA) carry the DGA/G motif. Residues 321 to 384 (ENALTGTTTE…DRKKLRANKA (64 aa)) are a coiled coil.

It belongs to the patatin family.

It is found in the vacuole. Non-specific lipolytic acyl hydrolase (LAH), an activity which is thought to be involved in the response of tubers to pathogens. Catalyzes the non-specific hydrolysis of phospholipids, glycolipids, sulfolipids, and mono- and diacylglycerols includng p-nitrophenyl caprate. Confers resistance to southern corn rootworm (SCRW). This Solanum cardiophyllum (Heartleaf nightshade) protein is Patatin-17.